Consider the following 263-residue polypeptide: Protein MARD1 (263 aa).

Residues 219-263 (SFLSRCFTCKKNLDQKQDIYIYRGEKGFCSSECRYQEMLLDQMET) form an FLZ-type zinc finger.

The protein belongs to the FLZ family. Interacts with KIN10 and KIN11 via its FLZ-type zinc finger domain. Interacts with KINB1 and KINB2 via its N-terminal part. Interacts with TZF4, TZF5 and TZF6. Interacts with MPK3 and MPK6.

It localises to the cytoplasm. The protein localises to the stress granule. It is found in the P-body. Its function is as follows. May act as an adapter to facilitate the interaction of SnRK1 complex with effector proteins, conferring tissue- and stimulus-type specific differences in the SnRK1 regulation pathway. Involved in seed dormancy control. The sequence is that of Protein MARD1 from Arabidopsis thaliana (Mouse-ear cress).